Reading from the N-terminus, the 854-residue chain is DNA mismatch repair protein MutS (854 aa).

616–623 (GPNMGGKS) contributes to the ATP binding site.

It belongs to the DNA mismatch repair MutS family.

Functionally, this protein is involved in the repair of mismatches in DNA. It is possible that it carries out the mismatch recognition step. This protein has a weak ATPase activity. The polypeptide is DNA mismatch repair protein MutS (Pectobacterium atrosepticum (strain SCRI 1043 / ATCC BAA-672) (Erwinia carotovora subsp. atroseptica)).